The sequence spans 224 residues: Ribose-5-phosphate isomerase A (224 aa).

Residues 34-37, 87-90, and 100-103 each bind substrate; these read TGST, DGAD, and KGGG. Glu-109 functions as the Proton acceptor in the catalytic mechanism. Lys-127 provides a ligand contact to substrate.

Belongs to the ribose 5-phosphate isomerase family. In terms of assembly, homodimer.

The catalysed reaction is aldehydo-D-ribose 5-phosphate = D-ribulose 5-phosphate. Its pathway is carbohydrate degradation; pentose phosphate pathway; D-ribose 5-phosphate from D-ribulose 5-phosphate (non-oxidative stage): step 1/1. Functionally, catalyzes the reversible conversion of ribose-5-phosphate to ribulose 5-phosphate. The chain is Ribose-5-phosphate isomerase A from Francisella tularensis subsp. tularensis (strain FSC 198).